Consider the following 215-residue polypeptide: Orotidine 5'-phosphate decarboxylase (215 aa).

Residues Asp-12, Lys-34, 60–69 (DFKVADIPNT), Ser-117, 170–180 (PGVGAQGGSAA), Gly-193, and Arg-194 contribute to the substrate site. The Proton donor role is filled by Lys-62.

Belongs to the OMP decarboxylase family. Type 1 subfamily. As to quaternary structure, homodimer.

The catalysed reaction is orotidine 5'-phosphate + H(+) = UMP + CO2. It participates in pyrimidine metabolism; UMP biosynthesis via de novo pathway; UMP from orotate: step 2/2. Its function is as follows. Catalyzes the decarboxylation of orotidine 5'-monophosphate (OMP) to uridine 5'-monophosphate (UMP). In Methanococcoides burtonii (strain DSM 6242 / NBRC 107633 / OCM 468 / ACE-M), this protein is Orotidine 5'-phosphate decarboxylase.